The sequence spans 294 residues: Elongation factor Ts (294 aa).

Positions 79–82 are involved in Mg(2+) ion dislocation from EF-Tu; that stretch reads TDFV.

The protein belongs to the EF-Ts family.

The protein localises to the cytoplasm. In terms of biological role, associates with the EF-Tu.GDP complex and induces the exchange of GDP to GTP. It remains bound to the aminoacyl-tRNA.EF-Tu.GTP complex up to the GTP hydrolysis stage on the ribosome. The polypeptide is Elongation factor Ts (Geobacillus thermodenitrificans (strain NG80-2)).